The primary structure comprises 190 residues: Crossover junction endodeoxyribonuclease RuvC (190 aa).

Catalysis depends on residues aspartate 8, glutamate 67, and aspartate 139. Mg(2+)-binding residues include aspartate 8, glutamate 67, and aspartate 139.

It belongs to the RuvC family. In terms of assembly, homodimer which binds Holliday junction (HJ) DNA. The HJ becomes 2-fold symmetrical on binding to RuvC with unstacked arms; it has a different conformation from HJ DNA in complex with RuvA. In the full resolvosome a probable DNA-RuvA(4)-RuvB(12)-RuvC(2) complex forms which resolves the HJ. It depends on Mg(2+) as a cofactor.

The protein resides in the cytoplasm. The catalysed reaction is Endonucleolytic cleavage at a junction such as a reciprocal single-stranded crossover between two homologous DNA duplexes (Holliday junction).. Functionally, the RuvA-RuvB-RuvC complex processes Holliday junction (HJ) DNA during genetic recombination and DNA repair. Endonuclease that resolves HJ intermediates. Cleaves cruciform DNA by making single-stranded nicks across the HJ at symmetrical positions within the homologous arms, yielding a 5'-phosphate and a 3'-hydroxyl group; requires a central core of homology in the junction. The consensus cleavage sequence is 5'-(A/T)TT(C/G)-3'. Cleavage occurs on the 3'-side of the TT dinucleotide at the point of strand exchange. HJ branch migration catalyzed by RuvA-RuvB allows RuvC to scan DNA until it finds its consensus sequence, where it cleaves and resolves the cruciform DNA. The sequence is that of Crossover junction endodeoxyribonuclease RuvC from Haemophilus influenzae (strain 86-028NP).